The sequence spans 369 residues: Protein-glutamate methylesterase/protein-glutamine glutaminase (369 aa).

In terms of domain architecture, Response regulatory spans 6–122 (RAVVADDSHF…SMEMSRLKDQ (117 aa)). The residue at position 56 (Asp56) is a 4-aspartylphosphate. A disordered region spans residues 136–178 (GATGSRSGTGSDSGTAPTTAGGSATDRRGTGGSSGQTTYVANP). A compositionally biased stretch (low complexity) spans 138 to 159 (TGSRSGTGSDSGTAPTTAGGSA). A CheB-type methylesterase domain is found at 173-367 (TYVANPTLVI…DGVIDTITTE (195 aa)). Active-site residues include Ser185, His212, and Asp309.

Belongs to the CheB family. Post-translationally, phosphorylated by CheA. Phosphorylation of the N-terminal regulatory domain activates the methylesterase activity.

The protein localises to the cytoplasm. It catalyses the reaction [protein]-L-glutamate 5-O-methyl ester + H2O = L-glutamyl-[protein] + methanol + H(+). The catalysed reaction is L-glutaminyl-[protein] + H2O = L-glutamyl-[protein] + NH4(+). In terms of biological role, involved in chemotaxis. Part of a chemotaxis signal transduction system that modulates chemotaxis in response to various stimuli. Catalyzes the demethylation of specific methylglutamate residues introduced into the chemoreceptors (methyl-accepting chemotaxis proteins or MCP) by CheR. Also mediates the irreversible deamidation of specific glutamine residues to glutamic acid. The chain is Protein-glutamate methylesterase/protein-glutamine glutaminase from Haloarcula marismortui (strain ATCC 43049 / DSM 3752 / JCM 8966 / VKM B-1809) (Halobacterium marismortui).